A 319-amino-acid chain; its full sequence is tRNA-cytidine(32) 2-sulfurtransferase (319 aa).

The PP-loop motif motif lies at 49 to 54 (SGGKDS). Positions 124, 127, and 215 each coordinate [4Fe-4S] cluster.

Belongs to the TtcA family. In terms of assembly, homodimer. Mg(2+) is required as a cofactor. [4Fe-4S] cluster serves as cofactor.

The protein resides in the cytoplasm. The catalysed reaction is cytidine(32) in tRNA + S-sulfanyl-L-cysteinyl-[cysteine desulfurase] + AH2 + ATP = 2-thiocytidine(32) in tRNA + L-cysteinyl-[cysteine desulfurase] + A + AMP + diphosphate + H(+). Its pathway is tRNA modification. Catalyzes the ATP-dependent 2-thiolation of cytidine in position 32 of tRNA, to form 2-thiocytidine (s(2)C32). The sulfur atoms are provided by the cysteine/cysteine desulfurase (IscS) system. The chain is tRNA-cytidine(32) 2-sulfurtransferase from Shewanella amazonensis (strain ATCC BAA-1098 / SB2B).